A 124-amino-acid chain; its full sequence is Kinocilin (124 aa).

2 helical membrane passes run 13–33 (LQLA…GISV) and 40–60 (MGGV…YPFL). The interval 80–124 (PHPGADHGEGRSSTNGNKEGARSSLSTVSRTLEKLKPGTRGAEEC) is disordered. The span at 90 to 109 (RSSTNGNKEGARSSLSTVSR) shows a compositional bias: polar residues. Basic and acidic residues predominate over residues 110 to 124 (TLEKLKPGTRGAEEC).

It localises to the membrane. Functionally, may play a role in stabilizing dense microtubular networks or in vesicular trafficking. The chain is Kinocilin (KNCN) from Homo sapiens (Human).